The chain runs to 216 residues: Ribonuclease HII (216 aa).

Residues 28–216 form the RNase H type-2 domain; the sequence is DIVCGVDEAG…PVRAALDLIR (189 aa). Positions 34, 35, and 126 each coordinate a divalent metal cation.

Belongs to the RNase HII family. Requires Mn(2+) as cofactor. It depends on Mg(2+) as a cofactor.

Its subcellular location is the cytoplasm. The enzyme catalyses Endonucleolytic cleavage to 5'-phosphomonoester.. Its function is as follows. Endonuclease that specifically degrades the RNA of RNA-DNA hybrids. The chain is Ribonuclease HII from Burkholderia vietnamiensis (strain G4 / LMG 22486) (Burkholderia cepacia (strain R1808)).